Consider the following 464-residue polypeptide: NAD(P) transhydrogenase subunit beta (464 aa).

6 consecutive transmembrane segments (helical) span residues 54–74 (VQAY…GTVI), 86–106 (LVAA…TGAL), 126–146 (VEMS…VIAF), 164–184 (HPLN…FAAT), 191–211 (FALM…IGGA), and 227–247 (AAAG…GALV). NADP(+) contacts are provided by residues 316–317 (YG), 348–353 (VAGRMP), 390–394 (GANDV), 425–432 (KRSMASGY), and 451–452 (DA).

The protein belongs to the PNT beta subunit family. In terms of assembly, complex of an alpha and a beta chain; in Rhodospirillum, the alpha chain seems to be made of two subunits.

Its subcellular location is the cell inner membrane. The catalysed reaction is NAD(+) + NADPH + H(+)(in) = NADH + NADP(+) + H(+)(out). Functionally, the transhydrogenation between NADH and NADP is coupled to respiration and ATP hydrolysis and functions as a proton pump across the membrane. This is NAD(P) transhydrogenase subunit beta (pntB) from Rhodospirillum rubrum (strain ATCC 11170 / ATH 1.1.1 / DSM 467 / LMG 4362 / NCIMB 8255 / S1).